The chain runs to 485 residues: Rhamnulokinase (485 aa).

10 to 14 (ASSGR) is an ATP binding site. Substrate is bound by residues A78 and 233–235 (HDT). Catalysis depends on D234, which acts as the Proton acceptor. Residue T256 coordinates ATP. N293 contributes to the substrate binding site. Residue Q301 participates in ATP binding. C351 and C368 form a disulfide bridge. G400 contributes to the ATP binding site.

It belongs to the rhamnulokinase family. It depends on Mg(2+) as a cofactor.

The enzyme catalyses L-rhamnulose + ATP = L-rhamnulose 1-phosphate + ADP + H(+). The protein operates within carbohydrate degradation; L-rhamnose degradation; glycerone phosphate from L-rhamnose: step 2/3. In terms of biological role, involved in the catabolism of L-rhamnose (6-deoxy-L-mannose). Catalyzes the transfer of the gamma-phosphate group from ATP to the 1-hydroxyl group of L-rhamnulose to yield L-rhamnulose 1-phosphate. In Bacillus subtilis (strain 168), this protein is Rhamnulokinase.